The primary structure comprises 348 residues: Protein RecA (348 aa).

66–73 (GPESSGKT) provides a ligand contact to ATP.

This sequence belongs to the RecA family.

It is found in the cytoplasm. Its function is as follows. Can catalyze the hydrolysis of ATP in the presence of single-stranded DNA, the ATP-dependent uptake of single-stranded DNA by duplex DNA, and the ATP-dependent hybridization of homologous single-stranded DNAs. It interacts with LexA causing its activation and leading to its autocatalytic cleavage. This chain is Protein RecA, found in Neisseria meningitidis serogroup A / serotype 4A (strain DSM 15465 / Z2491).